The following is a 107-amino-acid chain: Thioredoxin (107 aa).

The Thioredoxin domain occupies 2 to 107 (SEVLHINDAD…QLANFINQHI (106 aa)). Cysteines 32 and 35 form a disulfide.

The protein belongs to the thioredoxin family.

Participates in various redox reactions through the reversible oxidation of its active center dithiol to a disulfide and catalyzes dithiol-disulfide exchange reactions. This is Thioredoxin (trxA) from Haemophilus influenzae (strain ATCC 51907 / DSM 11121 / KW20 / Rd).